The sequence spans 127 residues: Ribonuclease VapC6 (127 aa).

A PINc domain is found at 26 to 120 (EPQRAEFCRS…ERHLPDIRVR (95 aa)). Aspartate 86 lines the Mg(2+) pocket.

The protein belongs to the PINc/VapC protein family. Mg(2+) serves as cofactor.

Toxic component of a type II toxin-antitoxin (TA) system. An RNase. The cognate antitoxin is VapB6. The protein is Ribonuclease VapC6 of Mycobacterium tuberculosis (strain CDC 1551 / Oshkosh).